Reading from the N-terminus, the 272-residue chain is tRNA pseudouridine synthase A (272 aa).

D52 serves as the catalytic Nucleophile. Y110 provides a ligand contact to substrate.

The protein belongs to the tRNA pseudouridine synthase TruA family. As to quaternary structure, homodimer.

The enzyme catalyses uridine(38/39/40) in tRNA = pseudouridine(38/39/40) in tRNA. Its function is as follows. Formation of pseudouridine at positions 38, 39 and 40 in the anticodon stem and loop of transfer RNAs. The sequence is that of tRNA pseudouridine synthase A from Cupriavidus necator (strain ATCC 17699 / DSM 428 / KCTC 22496 / NCIMB 10442 / H16 / Stanier 337) (Ralstonia eutropha).